Consider the following 189-residue polypeptide: MIAGVDEAGRGAWIGNVVAAAVILPNDYDLPDLTDSKKLSAAKRERLCAAIYEQAIAVACAWCSPEEIDQLNIHYATLCAMKKAVITLKVAPTEVLIDGKFAPELPFPTRTIIGGDALEPAISAASIVAKVTRDKQMIALDALYPDYGFAAHKGYGTQKHQQALRQFGVLPLHRRSYAPIAALLKNNKK.

The RNase H type-2 domain maps to 1–189 (MIAGVDEAGR…IAALLKNNKK (189 aa)). Aspartate 6, glutamate 7, and aspartate 98 together coordinate a divalent metal cation.

This sequence belongs to the RNase HII family. Mn(2+) is required as a cofactor. The cofactor is Mg(2+).

It is found in the cytoplasm. The catalysed reaction is Endonucleolytic cleavage to 5'-phosphomonoester.. Its function is as follows. Endonuclease that specifically degrades the RNA of RNA-DNA hybrids. The chain is Ribonuclease HII from Dichelobacter nodosus (strain VCS1703A).